The chain runs to 188 residues: Pyridoxal 5'-phosphate synthase subunit PdxT (188 aa).

L-glutamine is bound at residue 47-49 (GES). Cys79 (nucleophile) is an active-site residue. L-glutamine contacts are provided by residues Arg105 and 134-135 (IR). Active-site charge relay system residues include His170 and Glu172.

It belongs to the glutaminase PdxT/SNO family. In terms of assembly, in the presence of PdxS, forms a dodecamer of heterodimers. Only shows activity in the heterodimer.

It catalyses the reaction aldehydo-D-ribose 5-phosphate + D-glyceraldehyde 3-phosphate + L-glutamine = pyridoxal 5'-phosphate + L-glutamate + phosphate + 3 H2O + H(+). The enzyme catalyses L-glutamine + H2O = L-glutamate + NH4(+). It participates in cofactor biosynthesis; pyridoxal 5'-phosphate biosynthesis. Catalyzes the hydrolysis of glutamine to glutamate and ammonia as part of the biosynthesis of pyridoxal 5'-phosphate. The resulting ammonia molecule is channeled to the active site of PdxS. The polypeptide is Pyridoxal 5'-phosphate synthase subunit PdxT (Listeria innocua serovar 6a (strain ATCC BAA-680 / CLIP 11262)).